A 263-amino-acid chain; its full sequence is Type-2Ba cytolytic delta-endotoxin (263 aa).

Belongs to the cyt1/cyt2 endotoxin family. In terms of processing, active after proteolytic processing.

In terms of biological role, kills the larvae of dipteran insects by making pores in the epithelial cell membrane of the insect midgut. In Bacillus thuringiensis subsp. israelensis, this protein is Type-2Ba cytolytic delta-endotoxin (cyt2Ba1).